The chain runs to 560 residues: MSFNRRSKNITEGVARAPNRSMYYALGYQQDDFSKPMIGVANGHSTITPCNSGLQKLADAAVIGIKEAGGNPQIFGTPTISDGMAMGTEGMKYSLVSREVIADCVETCVGGQWMDGVIVIGGCDKNMPGGMMGMLRANVPALYVYGGTILPGKYKGQDLNIVSVFEAVGQFSAGKMAEEDFCEIERRAIPGSGSCGGMYTANTMSSSFEALGMSLPYSSTMANVEEEIVASVKVAAGVLVEAVKADLKPRDIVTKKAIENAVAVIMATGGSTNAVLHFLAIAHAAEVEWTIDDFERVRRRTPVLCDLKPSGKYLAIDLHHAGGIPAVMKELLKHGLLHGDCMTITGKTVAENLADVPDLRADQDVIRAVTNPIYAEGHLAILKGNLSPEGCVAKITGLKSPVMTGPARVFEDEQSALAAIMANKIVAGDVMVLRYLGPKGGPGMPEMLAPTGALIGQGLGESVGLITDGRFSGGTWGMVVGHVAPEAYAGGNIALVQEGDSITIDAHQLLLQLNVSDDELARRRAAWTAPAPRYTRGVLAKFAFNASSASAGAVLDKFGG.

Cys50 serves as a coordination point for [2Fe-2S] cluster. Asp82 serves as a coordination point for Mg(2+). Cys123 lines the [2Fe-2S] cluster pocket. Residues Asp124 and Lys125 each contribute to the Mg(2+) site. Residue Lys125 is modified to N6-carboxylysine. Residue Cys195 participates in [2Fe-2S] cluster binding. Mg(2+) is bound at residue Glu446. The Proton acceptor role is filled by Ser472.

Belongs to the IlvD/Edd family. As to quaternary structure, homodimer. The cofactor is [2Fe-2S] cluster. Requires Mg(2+) as cofactor.

The enzyme catalyses (2R)-2,3-dihydroxy-3-methylbutanoate = 3-methyl-2-oxobutanoate + H2O. It carries out the reaction (2R,3R)-2,3-dihydroxy-3-methylpentanoate = (S)-3-methyl-2-oxopentanoate + H2O. It participates in amino-acid biosynthesis; L-isoleucine biosynthesis; L-isoleucine from 2-oxobutanoate: step 3/4. The protein operates within amino-acid biosynthesis; L-valine biosynthesis; L-valine from pyruvate: step 3/4. Functionally, functions in the biosynthesis of branched-chain amino acids. Catalyzes the dehydration of (2R,3R)-2,3-dihydroxy-3-methylpentanoate (2,3-dihydroxy-3-methylvalerate) into 2-oxo-3-methylpentanoate (2-oxo-3-methylvalerate) and of (2R)-2,3-dihydroxy-3-methylbutanoate (2,3-dihydroxyisovalerate) into 2-oxo-3-methylbutanoate (2-oxoisovalerate), the penultimate precursor to L-isoleucine and L-valine, respectively. In Leptothrix cholodnii (strain ATCC 51168 / LMG 8142 / SP-6) (Leptothrix discophora (strain SP-6)), this protein is Dihydroxy-acid dehydratase.